Reading from the N-terminus, the 189-residue chain is Putative manganese efflux pump MntP (189 aa).

6 helical membrane-spanning segments follow: residues 3-23, 41-61, 69-89, 105-125, 133-153, and 168-188; these read PISL…AALG, LIFG…GQVA, DHWI…YNGI, FWIL…VGVG, IVIA…IGVM, and IVGG…HLSA.

It belongs to the MntP (TC 9.B.29) family.

It is found in the cell inner membrane. Functionally, probably functions as a manganese efflux pump. The sequence is that of Putative manganese efflux pump MntP from Pseudomonas savastanoi pv. phaseolicola (strain 1448A / Race 6) (Pseudomonas syringae pv. phaseolicola (strain 1448A / Race 6)).